Consider the following 229-residue polypeptide: MTSKSLSAWVIHKQWSGDTSARLKLFTRELGLINCLCKGGRTPKKQSLLQAFIPLWVSIEERYDQYYTRNIESTSSRLDLEGHSLFSGLYINELLYYTLSPDFPDPDLFDAYLFTLNGIALAREREAIEALLRRFEWALLKACGYTFSFLHEARTGELIVPDSYYQFVAGEGFILGGDKEIPGEHLLAIAADNLSEPAYLKSAKFIMRQAINHLLGGREIKARSLYGPA.

Belongs to the RecO family.

In terms of biological role, involved in DNA repair and RecF pathway recombination. In Legionella pneumophila (strain Lens), this protein is DNA repair protein RecO.